Consider the following 601-residue polypeptide: Nuclear receptor subfamily 2 group C member 1 (601 aa).

The tract at residues M1 to M179 is required for interaction with KAT2B. The segment at residues F111–C186 is a DNA-binding region (nuclear receptor). 2 NR C4-type zinc fingers span residues C114–C134 and C150–C169. Phosphoserine is present on residues S198 and S216. T221 is modified (phosphothreonine). T223 carries the phosphothreonine; by MAPK1 modification. Residue K251 forms a Glycyl lysine isopeptide (Lys-Gly) (interchain with G-Cter in SUMO); alternate linkage. A Glycyl lysine isopeptide (Lys-Gly) (interchain with G-Cter in SUMO2); alternate cross-link involves residue K251. Positions G349–E591 constitute an NR LBD domain. S582 is subject to Phosphoserine; by PKC. The tract at residues P585 to L601 is required for interaction with NRIP1. Residue K589 forms a Glycyl lysine isopeptide (Lys-Gly) (interchain with G-Cter in SUMO2) linkage.

The protein belongs to the nuclear hormone receptor family. NR2 subfamily. In terms of assembly, homodimer. Heterodimer; with NR2C2 which is required for chromatin remodeling and for binding to promoter regions such as globin DR1 repeats. Interacts with ESR1; the interaction prevents homodimerization of ESR1 and suppresses its transcriptional activity and cell growth. Interacts with NRIP1 (via its LXXLL motifs); the interaction provides corepressor activity. Interacts with HDAC3 (via the DNA-binding domain); the interaction recruits phosphorylated NR2C1 to PML bodies for sumoylation. Interacts with HDAC4 (via the DNA-binding domain). Interacts with PIAS1; the interaction is required for sumoylation of NR2C1. Interacts with UBE2I; the interaction is required for sumoylation of NR2C1. Interacts with KAT2B; the interaction acts as a corepressor of gene expression. Sumoylation requires both PIAS1 and UBE2I. Sumoylation appears to dissociate NR2C1 from the PML nuclear bodies. Enhances the interaction with NRIP1 but inhibits interaction with KAT2B. In proliferating cells, stimulation by all-trans retinoic acid, activation of MAPK1-mediated phosphorylation and recruitment to PML bodies with subsequent sumoylation, suppresses OCT4 expression. In terms of processing, phosphorylated on several serine and threonine residues. Phosphorylation on Thr-223, stimulated by all-trans retinoic acid (atRA) mediates PML location and sumoylation in proliferating cells which then modulates its association with effector molecules, KAT2B and NRIP1. Phosphorylation on Ser-582 by PKC is important for protein stability and function as activator of RARB.

It is found in the nucleus. The protein resides in the PML body. Orphan nuclear receptor. Binds the IR7 element in the promoter of its own gene in an autoregulatory negative feedback mechanism. Primarily repressor of a broad range of genes including ESR1 and RARB. Together with NR2C2, forms the core of the DRED (direct repeat erythroid-definitive) complex that represses embryonic and fetal globin transcription. Binds to hormone response elements (HREs) consisting of two 5'-AGGTCA-3' half site direct repeat consensus sequences. Also activator of OCT4 gene expression. Plays a fundamental role in early embryogenesis and regulates embryonic stem cell proliferation and differentiation. Mediator of retinoic acid-regulated preadipocyte proliferation. The chain is Nuclear receptor subfamily 2 group C member 1 (NR2C1) from Pongo abelii (Sumatran orangutan).